The chain runs to 271 residues: Neurexophilin-1 (271 aa).

The first 21 residues, 1 to 21, serve as a signal peptide directing secretion; sequence MQAACWYVLLLLQPTVYLVTC. The interval 22 to 97 is II; sequence ANLTNGGKSE…WDWLRNSTDL (76 aa). Residues Asn-23, Asn-68, Asn-93, Asn-146, Asn-156, and Asn-162 are each glycosylated (N-linked (GlcNAc...) asparagine). The segment at 98 to 176 is III; sequence QEPRPRAKRR…LVPPTKIVEF (79 aa). The interval 177–185 is IV (linker domain); the sequence is DLAQQTVID. The tract at residues 186-271 is v (Cys-rich); sequence AKDSKSFNCR…HSDTPYFPSG (86 aa).

Belongs to the neurexophilin family. May be proteolytically processed at the boundary between the N-terminal non-conserved and the central conserved domain in neuron-like cells. As to expression, highest level in brain.

It localises to the secreted. Functionally, may be signaling molecules that resemble neuropeptides. Ligand for alpha-neurexins. The protein is Neurexophilin-1 (Nxph1) of Rattus norvegicus (Rat).